The following is a 326-amino-acid chain: tRNA-dihydrouridine(16) synthase (326 aa).

FMN is bound by residues 8 to 10 and glutamine 69; that span reads PME. The active-site Proton donor is the cysteine 99. Residues lysine 140, 200–202, and 224–225 each bind FMN; these read NGE and GR.

It belongs to the Dus family. DusC subfamily. It depends on FMN as a cofactor.

It catalyses the reaction 5,6-dihydrouridine(16) in tRNA + NADP(+) = uridine(16) in tRNA + NADPH + H(+). The enzyme catalyses 5,6-dihydrouridine(16) in tRNA + NAD(+) = uridine(16) in tRNA + NADH + H(+). In terms of biological role, catalyzes the synthesis of 5,6-dihydrouridine (D), a modified base found in the D-loop of most tRNAs, via the reduction of the C5-C6 double bond in target uridines. Specifically modifies U16 in tRNAs. This Ralstonia nicotianae (strain ATCC BAA-1114 / GMI1000) (Ralstonia solanacearum) protein is tRNA-dihydrouridine(16) synthase.